Here is a 298-residue protein sequence, read N- to C-terminus: 4-hydroxy-3-methylbut-2-enyl diphosphate reductase (298 aa).

Cysteine 12 lines the [4Fe-4S] cluster pocket. (2E)-4-hydroxy-3-methylbut-2-enyl diphosphate is bound by residues histidine 40 and histidine 78. Dimethylallyl diphosphate is bound by residues histidine 40 and histidine 78. Residues histidine 40 and histidine 78 each contribute to the isopentenyl diphosphate site. A [4Fe-4S] cluster-binding site is contributed by cysteine 100. Position 128 (histidine 128) interacts with (2E)-4-hydroxy-3-methylbut-2-enyl diphosphate. Histidine 128 serves as a coordination point for dimethylallyl diphosphate. Histidine 128 serves as a coordination point for isopentenyl diphosphate. The active-site Proton donor is glutamate 130. (2E)-4-hydroxy-3-methylbut-2-enyl diphosphate is bound at residue threonine 171. Residue cysteine 200 participates in [4Fe-4S] cluster binding. The (2E)-4-hydroxy-3-methylbut-2-enyl diphosphate site is built by serine 228, serine 229, asparagine 230, and serine 270. Dimethylallyl diphosphate is bound by residues serine 228, serine 229, asparagine 230, and serine 270. The isopentenyl diphosphate site is built by serine 228, serine 229, asparagine 230, and serine 270.

It belongs to the IspH family. The cofactor is [4Fe-4S] cluster.

It catalyses the reaction isopentenyl diphosphate + 2 oxidized [2Fe-2S]-[ferredoxin] + H2O = (2E)-4-hydroxy-3-methylbut-2-enyl diphosphate + 2 reduced [2Fe-2S]-[ferredoxin] + 2 H(+). It carries out the reaction dimethylallyl diphosphate + 2 oxidized [2Fe-2S]-[ferredoxin] + H2O = (2E)-4-hydroxy-3-methylbut-2-enyl diphosphate + 2 reduced [2Fe-2S]-[ferredoxin] + 2 H(+). The protein operates within isoprenoid biosynthesis; dimethylallyl diphosphate biosynthesis; dimethylallyl diphosphate from (2E)-4-hydroxy-3-methylbutenyl diphosphate: step 1/1. It participates in isoprenoid biosynthesis; isopentenyl diphosphate biosynthesis via DXP pathway; isopentenyl diphosphate from 1-deoxy-D-xylulose 5-phosphate: step 6/6. Its function is as follows. Catalyzes the conversion of 1-hydroxy-2-methyl-2-(E)-butenyl 4-diphosphate (HMBPP) into a mixture of isopentenyl diphosphate (IPP) and dimethylallyl diphosphate (DMAPP). Acts in the terminal step of the DOXP/MEP pathway for isoprenoid precursor biosynthesis. The protein is 4-hydroxy-3-methylbut-2-enyl diphosphate reductase of Kosmotoga olearia (strain ATCC BAA-1733 / DSM 21960 / TBF 19.5.1).